We begin with the raw amino-acid sequence, 414 residues long: Multifunctional CCA protein (414 aa).

Residues glycine 8 and arginine 11 each contribute to the ATP site. CTP-binding residues include glycine 8 and arginine 11. Residues aspartate 21 and aspartate 23 each coordinate Mg(2+). Positions 91, 137, and 140 each coordinate ATP. Arginine 91, arginine 137, and arginine 140 together coordinate CTP. In terms of domain architecture, HD spans 228–329 (TGIHTLMVLE…VKLFDKGDFW (102 aa)).

This sequence belongs to the tRNA nucleotidyltransferase/poly(A) polymerase family. Bacterial CCA-adding enzyme type 1 subfamily. In terms of assembly, monomer. Can also form homodimers and oligomers. Mg(2+) is required as a cofactor. The cofactor is Ni(2+).

It carries out the reaction a tRNA precursor + 2 CTP + ATP = a tRNA with a 3' CCA end + 3 diphosphate. The catalysed reaction is a tRNA with a 3' CCA end + 2 CTP + ATP = a tRNA with a 3' CCACCA end + 3 diphosphate. Its function is as follows. Catalyzes the addition and repair of the essential 3'-terminal CCA sequence in tRNAs without using a nucleic acid template. Adds these three nucleotides in the order of C, C, and A to the tRNA nucleotide-73, using CTP and ATP as substrates and producing inorganic pyrophosphate. tRNA 3'-terminal CCA addition is required both for tRNA processing and repair. Also involved in tRNA surveillance by mediating tandem CCA addition to generate a CCACCA at the 3' terminus of unstable tRNAs. While stable tRNAs receive only 3'-terminal CCA, unstable tRNAs are marked with CCACCA and rapidly degraded. This chain is Multifunctional CCA protein, found in Shewanella frigidimarina (strain NCIMB 400).